Reading from the N-terminus, the 462-residue chain is 3-oxoacyl-[acyl-carrier-protein] synthase I, chloroplastic (462 aa).

A chloroplast-targeting transit peptide spans 1-35; it reads MHAHAAHALGLRVPPPAFPRRRARPRRRPAAAVLA. Residues 1–45 are disordered; the sequence is MHAHAAHALGLRVPPPAFPRRRARPRRRPAAAVLATSAAPQRETD. Residues 19–29 are compositionally biased toward basic residues; the sequence is PRRRARPRRRP. Positions 30–39 are enriched in low complexity; sequence AAAVLATSAA. The Ketosynthase family 3 (KS3) domain maps to 47–459; it reads RKRVVITGMG…GHNSVVVFAP (413 aa). Active-site for beta-ketoacyl synthase activity residues include cysteine 213, histidine 353, and histidine 389.

It belongs to the thiolase-like superfamily. Beta-ketoacyl-ACP synthases family. As to quaternary structure, homodimer.

It localises to the plastid. Its subcellular location is the chloroplast. The catalysed reaction is a fatty acyl-[ACP] + malonyl-[ACP] + H(+) = a 3-oxoacyl-[ACP] + holo-[ACP] + CO2. Its function is as follows. Catalyzes the condensation reaction of fatty acid synthesis by the addition to an acyl acceptor of two carbons from malonyl-ACP. Specific for elongation from C-10 to unsaturated C-16 and C-18 fatty acids. The sequence is that of 3-oxoacyl-[acyl-carrier-protein] synthase I, chloroplastic (KAS12) from Hordeum vulgare (Barley).